Consider the following 279-residue polypeptide: Large ribosomal subunit protein uL2 (279 aa).

A disordered region spans residues 222-279 (GMAMNPVDHPMGGGEGKSKSGGGRRHPKSPWGQLAKGLKTRNKKKASQKLIVRGRNAK). Over residues 232-242 (MGGGEGKSKSG) the composition is skewed to gly residues. The segment covering 259-268 (LKTRNKKKAS) has biased composition (basic residues).

Belongs to the universal ribosomal protein uL2 family. Part of the 50S ribosomal subunit. Forms a bridge to the 30S subunit in the 70S ribosome.

Functionally, one of the primary rRNA binding proteins. Required for association of the 30S and 50S subunits to form the 70S ribosome, for tRNA binding and peptide bond formation. It has been suggested to have peptidyltransferase activity; this is somewhat controversial. Makes several contacts with the 16S rRNA in the 70S ribosome. The sequence is that of Large ribosomal subunit protein uL2 from Chlorobium phaeobacteroides (strain DSM 266 / SMG 266 / 2430).